Here is a 405-residue protein sequence, read N- to C-terminus: PP2A regulatory subunit TAP46 (405 aa).

2 disordered regions span residues 159 to 189 (ERRG…SEEE) and 352 to 405 (ATTS…TPCG). Over residues 165-174 (TKASALSTPV) the composition is skewed to polar residues. 2 stretches are compositionally biased toward acidic residues: residues 176 to 189 (SGED…SEEE) and 367 to 377 (EDEEDDDEDEE). Basic and acidic residues predominate over residues 378–393 (AVMKARAFDDWKDDNP).

It belongs to the IGBP1/TAP42 family. In terms of assembly, interacts with the 36 kDa catalytic subunit (subunit C) of PP2A. Interacts with PP2A1 and PP2A2. Interacts with PP2A3, PPX1 and FYPP1. Interacts with FYPP3 and ABI5. Interacts with ATPK1/S6K1 and ATPK2/S6K2. Interacts with TIP41L. Phosphorylated by TOR kinase in vitro. Ubiquitous. Highly expressed in seed, and particularly in the embryo.

Functionally, involved in the positive regulation of the TOR signaling pathway. Acts as a negative regulator of PP2A catalytic activity. Plays a positive role in the ABA-regulated inhibition of germination, probably throught its interaction with ABI5. The chain is PP2A regulatory subunit TAP46 from Arabidopsis thaliana (Mouse-ear cress).